Consider the following 101-residue polypeptide: Feather keratin Cos2-2 (101 aa).

Ser2 is subject to N-acetylserine.

The protein belongs to the avian keratin family. As to quaternary structure, the avian keratins (F-ker, S-ker, C-ker and B-ker) are a complex mixture of very similar polypeptides.

The protein is Feather keratin Cos2-2 of Columba livia (Rock dove).